A 494-amino-acid chain; its full sequence is Glycerol kinase (494 aa).

T12 lines the ADP pocket. ATP-binding residues include T12, T13, and S14. T12 is a binding site for sn-glycerol 3-phosphate. R16 lines the ADP pocket. Sn-glycerol 3-phosphate-binding residues include R82, E83, Y134, and D244. R82, E83, Y134, D244, and Q245 together coordinate glycerol. 2 residues coordinate ADP: T266 and G309. Residues T266, G309, Q313, and G410 each contribute to the ATP site. Residues G410 and N414 each coordinate ADP.

It belongs to the FGGY kinase family. Homotetramer and homodimer (in equilibrium).

It carries out the reaction glycerol + ATP = sn-glycerol 3-phosphate + ADP + H(+). The protein operates within polyol metabolism; glycerol degradation via glycerol kinase pathway; sn-glycerol 3-phosphate from glycerol: step 1/1. Activated by phosphorylation and inhibited by fructose 1,6-bisphosphate (FBP). Key enzyme in the regulation of glycerol uptake and metabolism. Catalyzes the phosphorylation of glycerol to yield sn-glycerol 3-phosphate. The protein is Glycerol kinase of Desulfitobacterium hafniense (strain DSM 10664 / DCB-2).